The primary structure comprises 611 residues: DNA mismatch repair protein MutL (611 aa).

The protein belongs to the DNA mismatch repair MutL/HexB family.

This protein is involved in the repair of mismatches in DNA. It is required for dam-dependent methyl-directed DNA mismatch repair. May act as a 'molecular matchmaker', a protein that promotes the formation of a stable complex between two or more DNA-binding proteins in an ATP-dependent manner without itself being part of a final effector complex. The protein is DNA mismatch repair protein MutL of Borreliella afzelii (strain PKo) (Borrelia afzelii).